The sequence spans 202 residues: Imidazoleglycerol-phosphate dehydratase (202 aa).

Belongs to the imidazoleglycerol-phosphate dehydratase family.

It localises to the cytoplasm. The enzyme catalyses D-erythro-1-(imidazol-4-yl)glycerol 3-phosphate = 3-(imidazol-4-yl)-2-oxopropyl phosphate + H2O. It participates in amino-acid biosynthesis; L-histidine biosynthesis; L-histidine from 5-phospho-alpha-D-ribose 1-diphosphate: step 6/9. The polypeptide is Imidazoleglycerol-phosphate dehydratase (Rhizobium etli (strain CIAT 652)).